The chain runs to 150 residues: Small ribosomal subunit protein uS13 (150 aa).

It belongs to the universal ribosomal protein uS13 family. As to quaternary structure, part of the 30S ribosomal subunit. Forms a loose heterodimer with protein S19. Forms two bridges to the 50S subunit in the 70S ribosome.

Located at the top of the head of the 30S subunit, it contacts several helices of the 16S rRNA. In the 70S ribosome it contacts the 23S rRNA (bridge B1a) and protein L5 of the 50S subunit (bridge B1b), connecting the 2 subunits; these bridges are implicated in subunit movement. In Aeropyrum pernix (strain ATCC 700893 / DSM 11879 / JCM 9820 / NBRC 100138 / K1), this protein is Small ribosomal subunit protein uS13.